The chain runs to 212 residues: Large ribosomal subunit protein bL25 (212 aa).

The protein belongs to the bacterial ribosomal protein bL25 family. CTC subfamily. In terms of assembly, part of the 50S ribosomal subunit; part of the 5S rRNA/L5/L18/L25 subcomplex. Contacts the 5S rRNA. Binds to the 5S rRNA independently of L5 and L18.

In terms of biological role, this is one of the proteins that binds to the 5S RNA in the ribosome where it forms part of the central protuberance. This Leptospira interrogans serogroup Icterohaemorrhagiae serovar copenhageni (strain Fiocruz L1-130) protein is Large ribosomal subunit protein bL25.